The sequence spans 689 residues: DNA ligase (689 aa).

Residues 40–44, 89–90, and glutamate 121 contribute to the NAD(+) site; these read DSEYD and SL. The active-site N6-AMP-lysine intermediate is the lysine 123. Positions 144, 179, 295, and 319 each coordinate NAD(+). Residues cysteine 413, cysteine 416, cysteine 431, and cysteine 437 each coordinate Zn(2+). In terms of domain architecture, BRCT spans 610 to 689; it reads REQSSLTDKI…EEWLTLIKNV (80 aa).

It belongs to the NAD-dependent DNA ligase family. LigA subfamily. The cofactor is Mg(2+). It depends on Mn(2+) as a cofactor.

It catalyses the reaction NAD(+) + (deoxyribonucleotide)n-3'-hydroxyl + 5'-phospho-(deoxyribonucleotide)m = (deoxyribonucleotide)n+m + AMP + beta-nicotinamide D-nucleotide.. Functionally, DNA ligase that catalyzes the formation of phosphodiester linkages between 5'-phosphoryl and 3'-hydroxyl groups in double-stranded DNA using NAD as a coenzyme and as the energy source for the reaction. It is essential for DNA replication and repair of damaged DNA. In Rickettsia rickettsii (strain Iowa), this protein is DNA ligase.